The following is a 276-amino-acid chain: Palmitoyltransferase ZDHHC22 (276 aa).

Topologically, residues 1–9 (MGKLKLLNT) are cytoplasmic. Residues 10–30 (IAPAYFYAATVVTFALHFLLF) traverse the membrane as a helical segment. The Lumenal portion of the chain corresponds to 31-45 (TPTIFQSSDVTINPA). A helical membrane pass occupies residues 46-66 (MLAHISIFLFLMGNALGNYIM). Residues 67–131 (TIRNPSESAN…NCIGNRNMRY (65 aa)) are Cytoplasmic-facing. The DHHC domain maps to 101-137 (HFCKVCKKVILKRDHHCFFTGNCIGNRNMRYFIMFSI). The S-palmitoyl cysteine intermediate role is filled by C117. The chain crosses the membrane as a helical span at residues 132–152 (FIMFSIYTSSSCLYSLVIGVA). The Lumenal portion of the chain corresponds to 153 to 165 (YLTIEYSISFENP). The chain crosses the membrane as a helical span at residues 166 to 186 (LTFLTLLPLSTGYFFLGLISG). The Cytoplasmic portion of the chain corresponds to 187–188 (LQ). A helical membrane pass occupies residues 189 to 209 (FFLVIMLYIWLGIGLVSVGFC). At 210-276 (CQQLLLVARG…WQVYHDHKHD (67 aa)) the chain is on the lumenal side.

This sequence belongs to the DHHC palmitoyltransferase family.

The protein resides in the endoplasmic reticulum membrane. It is found in the golgi apparatus membrane. It carries out the reaction L-cysteinyl-[protein] + hexadecanoyl-CoA = S-hexadecanoyl-L-cysteinyl-[protein] + CoA. Palmitoyltransferase that could catalyze the addition of palmitate onto various protein substrates and be involved in a variety of cellular processes. This is Palmitoyltransferase ZDHHC22 (zdhhc22) from Danio rerio (Zebrafish).